Reading from the N-terminus, the 352-residue chain is S-adenosylmethionine:tRNA ribosyltransferase-isomerase (352 aa).

Belongs to the QueA family. As to quaternary structure, monomer.

The protein localises to the cytoplasm. It catalyses the reaction 7-aminomethyl-7-carbaguanosine(34) in tRNA + S-adenosyl-L-methionine = epoxyqueuosine(34) in tRNA + adenine + L-methionine + 2 H(+). It participates in tRNA modification; tRNA-queuosine biosynthesis. Its function is as follows. Transfers and isomerizes the ribose moiety from AdoMet to the 7-aminomethyl group of 7-deazaguanine (preQ1-tRNA) to give epoxyqueuosine (oQ-tRNA). This Solibacter usitatus (strain Ellin6076) protein is S-adenosylmethionine:tRNA ribosyltransferase-isomerase.